The primary structure comprises 313 residues: Protein FixB (313 aa).

Leucine 255 to aspartate 283 provides a ligand contact to FAD.

This sequence belongs to the ETF alpha-subunit/FixB family. Heterodimer of FixA and FixB.

Its pathway is amine and polyamine metabolism; carnitine metabolism. In terms of biological role, required for anaerobic carnitine reduction. May bring reductant to CaiA. The protein is Protein FixB of Escherichia coli O139:H28 (strain E24377A / ETEC).